Reading from the N-terminus, the 785-residue chain is Protein SEY1 (785 aa).

Residues 1 to 690 (MTDLEVSAIQ…KRSVINSKTE (690 aa)) are Cytoplasmic-facing. The region spanning 40–266 (GLNYHIVSVF…SEDQLFNEGY (227 aa)) is the GB1/RHD3-type G domain. 50–57 (GSQSTGKS) is a binding site for GTP. Residues 451–479 (PKLRELEEELSNLRTELVNKEQENIKTKI) are a coiled coil. A helical transmembrane segment spans residues 691–711 (VPLYIYALLLVLGWNEFMIIL). The Lumenal portion of the chain corresponds to 712 to 714 (RNP). A helical membrane pass occupies residues 715-735 (LLITLLLIGLTGLYLGYKTKL). Over 736–785 (LGPIVQVVQAMIQELQDQAKNKLRDVLVSEPEAPSQVRIGKEVDATKDED) the chain is Cytoplasmic.

Belongs to the TRAFAC class dynamin-like GTPase superfamily. GB1/RHD3 GTPase family. RHD3 subfamily.

Its subcellular location is the endoplasmic reticulum membrane. Its function is as follows. Cooperates with the reticulon proteins and tubule-shaping DP1 family proteins to generate and maintain the structure of the tubular endoplasmic reticulum network. Has GTPase activity, which is required for its function in ER organization. This is Protein SEY1 from Komagataella phaffii (strain GS115 / ATCC 20864) (Yeast).